The following is a 309-amino-acid chain: 4-hydroxy-3-methylbut-2-enyl diphosphate reductase (309 aa).

Cys12 serves as a coordination point for [4Fe-4S] cluster. The (2E)-4-hydroxy-3-methylbut-2-enyl diphosphate site is built by His41 and His74. Dimethylallyl diphosphate contacts are provided by His41 and His74. Residues His41 and His74 each coordinate isopentenyl diphosphate. Cys96 provides a ligand contact to [4Fe-4S] cluster. His124 lines the (2E)-4-hydroxy-3-methylbut-2-enyl diphosphate pocket. Residue His124 participates in dimethylallyl diphosphate binding. His124 contributes to the isopentenyl diphosphate binding site. The Proton donor role is filled by Glu126. Position 167 (Thr167) interacts with (2E)-4-hydroxy-3-methylbut-2-enyl diphosphate. Position 197 (Cys197) interacts with [4Fe-4S] cluster. Ser225, Ser226, Asn227, and Ser269 together coordinate (2E)-4-hydroxy-3-methylbut-2-enyl diphosphate. Residues Ser225, Ser226, Asn227, and Ser269 each coordinate dimethylallyl diphosphate. Isopentenyl diphosphate-binding residues include Ser225, Ser226, Asn227, and Ser269.

The protein belongs to the IspH family. It depends on [4Fe-4S] cluster as a cofactor.

The catalysed reaction is isopentenyl diphosphate + 2 oxidized [2Fe-2S]-[ferredoxin] + H2O = (2E)-4-hydroxy-3-methylbut-2-enyl diphosphate + 2 reduced [2Fe-2S]-[ferredoxin] + 2 H(+). It carries out the reaction dimethylallyl diphosphate + 2 oxidized [2Fe-2S]-[ferredoxin] + H2O = (2E)-4-hydroxy-3-methylbut-2-enyl diphosphate + 2 reduced [2Fe-2S]-[ferredoxin] + 2 H(+). Its pathway is isoprenoid biosynthesis; dimethylallyl diphosphate biosynthesis; dimethylallyl diphosphate from (2E)-4-hydroxy-3-methylbutenyl diphosphate: step 1/1. It participates in isoprenoid biosynthesis; isopentenyl diphosphate biosynthesis via DXP pathway; isopentenyl diphosphate from 1-deoxy-D-xylulose 5-phosphate: step 6/6. In terms of biological role, catalyzes the conversion of 1-hydroxy-2-methyl-2-(E)-butenyl 4-diphosphate (HMBPP) into a mixture of isopentenyl diphosphate (IPP) and dimethylallyl diphosphate (DMAPP). Acts in the terminal step of the DOXP/MEP pathway for isoprenoid precursor biosynthesis. The chain is 4-hydroxy-3-methylbut-2-enyl diphosphate reductase from Pseudoalteromonas translucida (strain TAC 125).